A 753-amino-acid chain; its full sequence is Subtilisin-like protease SBT3.17 (753 aa).

A signal peptide spans 1–29 (MGNSFLIADTSSLVIGLLLILNGVFISAA). Positions 30–116 (KHYGLNKIHI…VVPSRVMRLK (87 aa)) are cleaved as a propeptide — activation peptide. Residues 38–115 (HIVHLGAKQH…RVVPSRVMRL (78 aa)) enclose the Inhibitor I9 domain. An N-linked (GlcNAc...) asparagine glycan is attached at Asn-97. Residues 120 to 603 (TFDYLGLLPT…GGLINPEKVT (484 aa)) enclose the Peptidase S8 domain. Asp-150 serves as the catalytic Charge relay system. A glycan (N-linked (GlcNAc...) asparagine) is linked at Asn-161. His-227 acts as the Charge relay system in catalysis. Residue Asn-369 is glycosylated (N-linked (GlcNAc...) asparagine). The active-site Charge relay system is Ser-534. N-linked (GlcNAc...) asparagine glycans are attached at residues Asn-639, Asn-704, and Asn-737.

The protein belongs to the peptidase S8 family.

It localises to the secreted. This chain is Subtilisin-like protease SBT3.17, found in Arabidopsis thaliana (Mouse-ear cress).